The chain runs to 203 residues: Protein GrpE 2 (203 aa).

The segment covering 1–12 (MPTRPQEPDRAA) has biased composition (basic and acidic residues). Positions 1–64 (MPTRPQEPDR…APAEDEYTTA (64 aa)) are disordered. The span at 45 to 56 (GEPGPDAAGPAP) shows a compositional bias: low complexity.

It belongs to the GrpE family. As to quaternary structure, homodimer.

The protein resides in the cytoplasm. Participates actively in the response to hyperosmotic and heat shock by preventing the aggregation of stress-denatured proteins, in association with DnaK and GrpE. It is the nucleotide exchange factor for DnaK and may function as a thermosensor. Unfolded proteins bind initially to DnaJ; upon interaction with the DnaJ-bound protein, DnaK hydrolyzes its bound ATP, resulting in the formation of a stable complex. GrpE releases ADP from DnaK; ATP binding to DnaK triggers the release of the substrate protein, thus completing the reaction cycle. Several rounds of ATP-dependent interactions between DnaJ, DnaK and GrpE are required for fully efficient folding. This chain is Protein GrpE 2, found in Streptomyces avermitilis (strain ATCC 31267 / DSM 46492 / JCM 5070 / NBRC 14893 / NCIMB 12804 / NRRL 8165 / MA-4680).